The primary structure comprises 444 residues: Tubulin beta-4 chain (444 aa).

GTP is bound by residues Q11, E69, S138, G142, T143, G144, N204, and N226. Position 69 (E69) interacts with Mg(2+).

This sequence belongs to the tubulin family. In terms of assembly, dimer of alpha and beta chains. A typical microtubule is a hollow water-filled tube with an outer diameter of 25 nm and an inner diameter of 15 nM. Alpha-beta heterodimers associate head-to-tail to form protofilaments running lengthwise along the microtubule wall with the beta-tubulin subunit facing the microtubule plus end conferring a structural polarity. Microtubules usually have 13 protofilaments but different protofilament numbers can be found in some organisms and specialized cells. Mg(2+) serves as cofactor.

Its subcellular location is the cytoplasm. It is found in the cytoskeleton. Tubulin is the major constituent of microtubules, a cylinder consisting of laterally associated linear protofilaments composed of alpha- and beta-tubulin heterodimers. Microtubules grow by the addition of GTP-tubulin dimers to the microtubule end, where a stabilizing cap forms. Below the cap, tubulin dimers are in GDP-bound state, owing to GTPase activity of alpha-tubulin. The protein is Tubulin beta-4 chain (TUBB4) of Arabidopsis thaliana (Mouse-ear cress).